A 447-amino-acid polypeptide reads, in one-letter code: NADH-quinone oxidoreductase subunit F (447 aa).

Position 61-70 (61-70 (GRGGAGFSTG)) interacts with NAD(+). 174 to 221 (GAGRYICGEETALINSLEGRRANPRAKPPFPAVFGLWGKPTCVNNVET) is an FMN binding site. Cys-352, Cys-355, Cys-358, and Cys-399 together coordinate [4Fe-4S] cluster.

The protein belongs to the complex I 51 kDa subunit family. In terms of assembly, composed of 13 different subunits. Subunits NuoCD, E, F, and G constitute the peripheral sector of the complex. [4Fe-4S] cluster serves as cofactor. Requires FMN as cofactor.

It catalyses the reaction a quinone + NADH + 5 H(+)(in) = a quinol + NAD(+) + 4 H(+)(out). Its function is as follows. NDH-1 shuttles electrons from NADH, via FMN and iron-sulfur (Fe-S) centers, to quinones in the respiratory chain. Couples the redox reaction to proton translocation (for every two electrons transferred, four hydrogen ions are translocated across the cytoplasmic membrane), and thus conserves the redox energy in a proton gradient. The sequence is that of NADH-quinone oxidoreductase subunit F (nuoF) from Buchnera aphidicola subsp. Schizaphis graminum (strain Sg).